The chain runs to 534 residues: N-acetylglutamate synthase, mitochondrial (534 aa).

The transit peptide at 1–18 (MATALMAVVLRAAAVAPR) directs the protein to the mitochondrion. The segment at 19 to 99 (LRGRGGTGGA…HESPEPPSGR (81 aa)) is disordered. The amino-acid kinase domain (AAK) stretch occupies residues 19–376 (LRGRGGTGGA…SGTLFKNAER (358 aa)). Positions 81–96 (VPSPRPPVPHESPEPP) are enriched in pro residues. The N-acetyltransferase domain maps to 375-526 (ERMLRVRSLD…HAKGLPDSFH (152 aa)). Residues Lys-401, Lys-444, and 474–479 (RSRVTN) contribute to the substrate site.

The protein belongs to the acetyltransferase family. Homodimer. Homotetramer. Probably processed by mitochondrial processing peptidase (MPP). The long form has not yet been isolated. As to expression, highly expressed in the adult liver, kidney and small intestine. Weakly expressed in the fetal liver, lung, pancreas, placenta, heart and brain tissue.

The protein resides in the mitochondrion matrix. It catalyses the reaction L-glutamate + acetyl-CoA = N-acetyl-L-glutamate + CoA + H(+). The protein operates within amino-acid biosynthesis; L-arginine biosynthesis; N(2)-acetyl-L-ornithine from L-glutamate: step 1/4. Increased by L-arginine. Plays a role in the regulation of ureagenesis by producing the essential cofactor N-acetylglutamate (NAG), thus modulating carbamoylphosphate synthase I (CPS1) activity. The polypeptide is N-acetylglutamate synthase, mitochondrial (NAGS) (Homo sapiens (Human)).